Reading from the N-terminus, the 258-residue chain is Coiled-coil domain-containing protein 127 (258 aa).

A coiled-coil region spans residues 50 to 170 (KEIEKEKEAC…EEALAERQSI (121 aa)).

This Sus scrofa (Pig) protein is Coiled-coil domain-containing protein 127 (CCDC127).